A 753-amino-acid polypeptide reads, in one-letter code: Ion-translocating oxidoreductase complex subunit C (753 aa).

2 consecutive 4Fe-4S ferredoxin-type domains span residues 367 to 397 (EMGE…QQLY) and 407 to 436 (KATA…VQYF). [4Fe-4S] cluster contacts are provided by cysteine 377, cysteine 380, cysteine 383, cysteine 387, cysteine 416, cysteine 419, cysteine 422, and cysteine 426. 4 disordered regions span residues 517–561 (AKPD…RKAA), 606–625 (RKAE…PVDP), 640–659 (RKAE…PVDP), and 705–735 (AKAR…AVAA). Residues 526 to 537 (AAREARKAEARA) show a composition bias toward basic and acidic residues. 3 stretches are compositionally biased toward low complexity: residues 610–622 (QQVA…VAEP), 644–656 (QQVA…VAEP), and 712–735 (QQAA…AVAA).

This sequence belongs to the 4Fe4S bacterial-type ferredoxin family. RnfC subfamily. In terms of assembly, the complex is composed of six subunits: RnfA, RnfB, RnfC, RnfD, RnfE and RnfG. [4Fe-4S] cluster serves as cofactor.

It is found in the cell inner membrane. Its function is as follows. Part of a membrane-bound complex that couples electron transfer with translocation of ions across the membrane. In Klebsiella pneumoniae (strain 342), this protein is Ion-translocating oxidoreductase complex subunit C.